The sequence spans 517 residues: Light-independent protochlorophyllide reductase subunit B (517 aa).

Residue aspartate 36 participates in [4Fe-4S] cluster binding. Aspartate 285 serves as the catalytic Proton donor. 420 to 421 (GL) contributes to the substrate binding site.

It belongs to the ChlB/BchB/BchZ family. Protochlorophyllide reductase is composed of three subunits; BchL, BchN and BchB. Forms a heterotetramer of two BchB and two BchN subunits. The cofactor is [4Fe-4S] cluster.

The enzyme catalyses chlorophyllide a + oxidized 2[4Fe-4S]-[ferredoxin] + 2 ADP + 2 phosphate = protochlorophyllide a + reduced 2[4Fe-4S]-[ferredoxin] + 2 ATP + 2 H2O. The protein operates within porphyrin-containing compound metabolism; bacteriochlorophyll biosynthesis (light-independent). Its function is as follows. Component of the dark-operative protochlorophyllide reductase (DPOR) that uses Mg-ATP and reduced ferredoxin to reduce ring D of protochlorophyllide (Pchlide) to form chlorophyllide a (Chlide). This reaction is light-independent. The NB-protein (BchN-BchB) is the catalytic component of the complex. The chain is Light-independent protochlorophyllide reductase subunit B from Bradyrhizobium sp. (strain BTAi1 / ATCC BAA-1182).